The sequence spans 108 residues: Thioredoxin (108 aa).

Residues 2–108 (NKIIELTDQN…LKEFLDENIN (107 aa)) form the Thioredoxin domain. A disulfide bond links Cys-32 and Cys-35.

Belongs to the thioredoxin family.

Functionally, participates in various redox reactions through the reversible oxidation of its active center dithiol to a disulfide and catalyzes dithiol-disulfide exchange reactions. The polypeptide is Thioredoxin (trxA) (Buchnera aphidicola subsp. Acyrthosiphon pisum (strain APS) (Acyrthosiphon pisum symbiotic bacterium)).